Consider the following 331-residue polypeptide: tRNA N6-adenosine threonylcarbamoyltransferase (331 aa).

Positions 107 and 111 each coordinate Fe cation. Substrate contacts are provided by residues 129–133, Asp162, Gly175, and Asn269; that span reads LVSGG. Asp297 lines the Fe cation pocket.

It belongs to the KAE1 / TsaD family. Fe(2+) is required as a cofactor.

The protein resides in the cytoplasm. The enzyme catalyses L-threonylcarbamoyladenylate + adenosine(37) in tRNA = N(6)-L-threonylcarbamoyladenosine(37) in tRNA + AMP + H(+). Its function is as follows. Required for the formation of a threonylcarbamoyl group on adenosine at position 37 (t(6)A37) in tRNAs that read codons beginning with adenine. Is involved in the transfer of the threonylcarbamoyl moiety of threonylcarbamoyl-AMP (TC-AMP) to the N6 group of A37, together with TsaE and TsaB. TsaD likely plays a direct catalytic role in this reaction. This Wolinella succinogenes (strain ATCC 29543 / DSM 1740 / CCUG 13145 / JCM 31913 / LMG 7466 / NCTC 11488 / FDC 602W) (Vibrio succinogenes) protein is tRNA N6-adenosine threonylcarbamoyltransferase.